Reading from the N-terminus, the 212-residue chain is ATP-dependent dethiobiotin synthetase BioD (212 aa).

Glycine 13–valine 18 is a binding site for ATP. Threonine 17 serves as a coordination point for Mg(2+). Lysine 33 is a catalytic residue. Mg(2+) is bound at residue glutamate 100. Residues glutamate 100 to glycine 103 and proline 184 to valine 186 contribute to the ATP site.

It belongs to the dethiobiotin synthetase family. Homodimer. Mg(2+) is required as a cofactor.

It is found in the cytoplasm. The enzyme catalyses (7R,8S)-7,8-diammoniononanoate + CO2 + ATP = (4R,5S)-dethiobiotin + ADP + phosphate + 3 H(+). It participates in cofactor biosynthesis; biotin biosynthesis; biotin from 7,8-diaminononanoate: step 1/2. Functionally, catalyzes a mechanistically unusual reaction, the ATP-dependent insertion of CO2 between the N7 and N8 nitrogen atoms of 7,8-diaminopelargonic acid (DAPA, also called 7,8-diammoniononanoate) to form a ureido ring. The sequence is that of ATP-dependent dethiobiotin synthetase BioD from Nitrobacter hamburgensis (strain DSM 10229 / NCIMB 13809 / X14).